Consider the following 90-residue polypeptide: Cyclin-dependent kinases regulatory subunit 1 (90 aa).

The protein belongs to the CKS family.

In terms of biological role, binds to the catalytic subunit of the cyclin dependent kinases and is essential for their biological function. The polypeptide is Cyclin-dependent kinases regulatory subunit 1 (CKS1) (Oryza sativa subsp. indica (Rice)).